A 331-amino-acid chain; its full sequence is XylDLEGF operon transcriptional activator 1 (331 aa).

One can recognise an HTH araC/xylS-type domain in the interval 214–315 (ERVVQFIEEN…GELPSDTLRR (102 aa)). DNA-binding regions (H-T-H motif) lie at residues 231–252 (ERLA…EKHA) and 282–305 (VTEM…RSTF).

It is found in the cytoplasm. Functionally, regulatory protein of the TOL plasmid xyl operons. XylS activates the xylXYZLTEGFJQKIH operon required for the degradation of toluene, m-xylene and p-xylene. This Pseudomonas putida (Arthrobacter siderocapsulatus) protein is XylDLEGF operon transcriptional activator 1 (xylS1).